The following is a 149-amino-acid chain: MHCPFCSAVDTKVIDSRLVGEGSSVRRRRQCLVCNERFTTFEVAELVMPRVVKSNDVREPFNEEKLRKGMLKALEKRPVSADDVEMALNHIKSYLRGTGEREVPSKMIGNLVMEQLKKLDKVAYIRFASVYRSFEDIKEFGEEIARLQD.

Residues Cys3–Cys34 fold into a zinc finger. Residues Pro49–Glu139 form the ATP-cone domain.

The protein belongs to the NrdR family. The cofactor is Zn(2+).

Negatively regulates transcription of bacterial ribonucleotide reductase nrd genes and operons by binding to NrdR-boxes. This Enterobacter sp. (strain 638) protein is Transcriptional repressor NrdR.